The primary structure comprises 37 residues: Large ribosomal subunit protein bL36c (37 aa).

It belongs to the bacterial ribosomal protein bL36 family.

Its subcellular location is the plastid. The protein localises to the chloroplast. This is Large ribosomal subunit protein bL36c from Oltmannsiellopsis viridis (Marine flagellate).